A 68-amino-acid polypeptide reads, in one-letter code: Alpha/kappa-conotoxin-like pl14.2 (68 aa).

Positions 1–27 are cleaved as a signal peptide; sequence MPSVRSVTCCCLLWMMFSVQLVTPGSP. Positions 28 to 39 are excised as a propeptide; sequence ATAQLSGQRTAR. Cystine bridges form between cysteine 46–cysteine 61 and cysteine 50–cysteine 63. Arginine 64 carries the arginine amide modification. The propeptide occupies 65–68; it reads GKRD.

It belongs to the conotoxin J superfamily. In terms of tissue distribution, expressed by the venom duct.

The protein localises to the secreted. Functionally, highly inhibits both nicotinic acetylcholine receptors (neuronal (alpha-3/beta-4) and muscular (alpha-1/beta-1/epsilon/delta) subtypes) and the voltage-gated potassium channel Kv1.6/KCNA6 subtype. The sequence is that of Alpha/kappa-conotoxin-like pl14.2 from Conus planorbis (Planorbis cone).